Consider the following 210-residue polypeptide: Putative protein-lysine deacylase ABHD14B (210 aa).

A2 is subject to N-acetylalanine. At S91 the chain carries Phosphoserine. Residues S111, D162, and H188 each act as charge relay system in the active site.

This sequence belongs to the AB hydrolase superfamily. ABHD14 family. As to quaternary structure, may interact with TAF1. As to expression, ubiquitous. Detected in spleen, thymus, prostate, testis, ovary, small intestine, colon, peripheral blood leukocyte, heart, placenta, lung, liver, skeletal muscle, pancreas and kidney.

It localises to the cytoplasm. It is found in the nucleus. The catalysed reaction is L-lysyl-[protein] + acetyl-CoA = N(6)-acetyl-L-lysyl-[protein] + CoA + H(+). Acts as an atypical protein-lysine deacetylase in vitro. Catalyzes the deacetylation of lysine residues using CoA as substrate, generating acetyl-CoA and the free amine of protein-lysine residues. Additional experiments are however required to confirm the protein-lysine deacetylase activity in vivo. Has hydrolase activity towards various surrogate p-nitrophenyl (pNp) substrates, such as pNp-butyrate, pNp-acetate and pNp-octanoate in vitro, with a strong preference for pNp-acetate. May activate transcription. This is Putative protein-lysine deacylase ABHD14B from Homo sapiens (Human).